The chain runs to 261 residues: Carbonic anhydrase 1 (261 aa).

An N-acetylalanine modification is found at Ala-2. Positions 4 to 261 (SDWGYDSPNG…LKGRTVRAFF (258 aa)) constitute an Alpha-carbonic anhydrase domain. His-65 serves as the catalytic Proton donor/acceptor. Positions 95, 97, and 120 each coordinate Zn(2+). Substrate is bound by residues Thr-200 and 200-201 (TH).

The protein belongs to the alpha-carbonic anhydrase family. Zn(2+) is required as a cofactor.

Its subcellular location is the cytoplasm. It catalyses the reaction hydrogencarbonate + H(+) = CO2 + H2O. It carries out the reaction urea = cyanamide + H2O. Inhibited by acetazolamide. Functionally, catalyzes the reversible hydration of carbon dioxide. Can hydrate cyanamide to urea. This chain is Carbonic anhydrase 1 (CA1), found in Equus caballus (Horse).